Here is a 526-residue protein sequence, read N- to C-terminus: Probable fucosyltransferase 7 (526 aa).

Over 1–4 (MKTK) the chain is Cytoplasmic. The helical; Signal-anchor for type II membrane protein transmembrane segment at 5–25 (LMITIFSCLLLWSMLLLLSFS) threads the bilayer. The Lumenal portion of the chain corresponds to 26–526 (NIFKHQLLGA…KLVDDTKNEL (501 aa)). N-linked (GlcNAc...) asparagine glycosylation is found at Asn-211, Asn-215, and Asn-363.

It belongs to the glycosyltransferase 37 family. Expressed in roots, leaves, stems and seedlings.

It is found in the golgi apparatus. The protein localises to the golgi stack membrane. Its pathway is protein modification; protein glycosylation. In terms of biological role, may be involved in cell wall biosynthesis. May act as a fucosyltransferase. This chain is Probable fucosyltransferase 7 (FUT7), found in Arabidopsis thaliana (Mouse-ear cress).